Here is a 76-residue protein sequence, read N- to C-terminus: Protein CYSTEINE-RICH TRANSMEMBRANE MODULE 11 (76 aa).

The interval Gly19–Arg45 is disordered. The helical transmembrane segment at Val47–Val63 threads the bilayer.

Belongs to the CYSTM1 family. As to quaternary structure, heterodimers. Interacts with CYSTM6, CYSTM7 and WIH1/CYSTM13. As to expression, mostly expressed in stems, siliques, leaves and flowers and, to a lower extent, in roots.

It is found in the cell membrane. It localises to the cytoplasm. Functionally, involved in resistance to abiotic stress. The sequence is that of Protein CYSTEINE-RICH TRANSMEMBRANE MODULE 11 from Arabidopsis thaliana (Mouse-ear cress).